Here is a 124-residue protein sequence, read N- to C-terminus: Putative iron-sulfur cluster insertion protein ErpA (124 aa).

The iron-sulfur cluster site is built by cysteine 49, cysteine 113, and cysteine 115.

This sequence belongs to the HesB/IscA family. As to quaternary structure, homodimer. It depends on iron-sulfur cluster as a cofactor.

In terms of biological role, required for insertion of 4Fe-4S clusters. The sequence is that of Putative iron-sulfur cluster insertion protein ErpA from Acidovorax sp. (strain JS42).